The primary structure comprises 2083 residues: Non-reducing polyketide synthase curS2 (2083 aa).

The N-terminal acylcarrier protein transacylase domain (SAT) stretch occupies residues 9-246 (LLFGDVTDPW…NELDIHALQH (238 aa)). The Ketosynthase family 3 (KS3) domain occupies 366-798 (RDGIAIVGMA…GGNACLLLED (433 aa)). Catalysis depends on for beta-ketoacyl synthase activity residues Cys543, His678, and His717. The malonyl-CoA:ACP transacylase (MAT) domain stretch occupies residues 895 to 1201 (VFVFTGQGSH…THTLQPNTHN (307 aa)). Catalysis depends on Ser986, which acts as the For acyl/malonyl transferase activity. Residues 1276–1415 (AQYLVSKSSS…DPAKTQADWD (140 aa)) form an N-terminal hotdog fold region. Residues 1276-1585 (AQYLVSKSSS…YQELPRVTWK (310 aa)) form the PKS/mFAS DH domain. Positions 1285 to 1581 (SPKVQVVFRA…IDLRYQELPR (297 aa)) are product template (PT) domain. Positions 1437–1585 (GHRMQPEVFY…YQELPRVTWK (149 aa)) are C-terminal hotdog fold. Residues 1637–1714 (DFDEGLVDAI…DLRRAFGANK (78 aa)) enclose the Carrier domain. At Ser1674 the chain carries O-(pantetheine 4'-phosphoryl)serine. The tract at residues 1710–1790 (FGANKPKTSK…KMDETDTSPA (81 aa)) is disordered. Over residues 1718-1736 (SKPQPGSTTPSSSQSSIPS) the composition is skewed to low complexity. The segment covering 1745–1754 (MSDTASSLGS) has biased composition (polar residues). The segment covering 1771–1784 (LEPKPNHHLGKMDE) has biased composition (basic and acidic residues). The thioesterase (TE) domain stretch occupies residues 1811-2058 (MMADGTGTIA…LSVAGDHLDL (248 aa)). The active-site For thioesterase activity is His2065.

The protein operates within mycotoxin biosynthesis. Its function is as follows. Non-reducing polyketide synthase; part of the gene cluster that mediates the biosynthesis of 10,11-dehydrocurvularin, a prevalent fungal phytotoxin with heat shock response and immune-modulatory activities. The highly reducing polyketide synthase curS1 is responsible for biosynthesis up to the tetraketide stage. The non-reducing polyketide synthase curS2 then conducts four additional chain extension cycles, producing the unreduced part of the nascent octaketide from C-1 to C-8 in 10,11-dehydrocurvularin. This chain is Non-reducing polyketide synthase curS2, found in Aspergillus terreus.